The following is a 454-amino-acid chain: UDP-N-acetylmuramoylalanine--D-glutamate ligase (454 aa).

117–123 serves as a coordination point for ATP; sequence GTNGKTT.

Belongs to the MurCDEF family.

The protein resides in the cytoplasm. It carries out the reaction UDP-N-acetyl-alpha-D-muramoyl-L-alanine + D-glutamate + ATP = UDP-N-acetyl-alpha-D-muramoyl-L-alanyl-D-glutamate + ADP + phosphate + H(+). It functions in the pathway cell wall biogenesis; peptidoglycan biosynthesis. Cell wall formation. Catalyzes the addition of glutamate to the nucleotide precursor UDP-N-acetylmuramoyl-L-alanine (UMA). The chain is UDP-N-acetylmuramoylalanine--D-glutamate ligase from Alkaliphilus oremlandii (strain OhILAs) (Clostridium oremlandii (strain OhILAs)).